The primary structure comprises 405 residues: Threonine synthase (405 aa).

Residue lysine 104 is modified to N6-(pyridoxal phosphate)lysine. Pyridoxal 5'-phosphate is bound by residues asparagine 130, glycine 231–asparagine 235, and threonine 369.

It belongs to the threonine synthase family. Homotrimer. Pyridoxal 5'-phosphate is required as a cofactor.

The enzyme catalyses O-phospho-L-homoserine + H2O = L-threonine + phosphate. It functions in the pathway amino-acid biosynthesis; L-threonine biosynthesis; L-threonine from L-aspartate: step 5/5. In terms of biological role, catalyzes the gamma-elimination of phosphate from L-phosphohomoserine and the beta-addition of water to produce L-threonine. Does not catalyze the conversion of O-acetyl-L-homoserine into threonine. The sequence is that of Threonine synthase (thrC) from Methanosarcina acetivorans (strain ATCC 35395 / DSM 2834 / JCM 12185 / C2A).